Consider the following 418-residue polypeptide: Glucose-1-phosphate adenylyltransferase (418 aa).

Residues tyrosine 107, glycine 172, 187-188, and serine 205 contribute to the alpha-D-glucose 1-phosphate site; that span reads EK.

The protein belongs to the bacterial/plant glucose-1-phosphate adenylyltransferase family. In terms of assembly, homotetramer.

It catalyses the reaction alpha-D-glucose 1-phosphate + ATP + H(+) = ADP-alpha-D-glucose + diphosphate. It functions in the pathway glycan biosynthesis; glycogen biosynthesis. Involved in the biosynthesis of ADP-glucose, a building block required for the elongation reactions to produce glycogen. Catalyzes the reaction between ATP and alpha-D-glucose 1-phosphate (G1P) to produce pyrophosphate and ADP-Glc. This chain is Glucose-1-phosphate adenylyltransferase, found in Gemmatimonas aurantiaca (strain DSM 14586 / JCM 11422 / NBRC 100505 / T-27).